A 136-amino-acid polypeptide reads, in one-letter code: ATP synthase epsilon chain 2 (136 aa).

It belongs to the ATPase epsilon chain family. In terms of assembly, F-type ATPases have 2 components, CF(1) - the catalytic core - and CF(0) - the membrane proton channel. CF(1) has five subunits: alpha(3), beta(3), gamma(1), delta(1), epsilon(1). CF(0) has three main subunits: a, b and c.

It is found in the cell inner membrane. Functionally, produces ATP from ADP in the presence of a proton gradient across the membrane. The protein is ATP synthase epsilon chain 2 of Nitrobacter hamburgensis (strain DSM 10229 / NCIMB 13809 / X14).